An 841-amino-acid chain; its full sequence is Protein translocase subunit SecA (841 aa).

ATP-binding positions include 79–80, glutamine 85, 103–107, and aspartate 492; these read MF and GEGKT. Positions 786 to 813 are disordered; the sequence is REEVVQGQTTAHQPQEGDDNKKAKKAPV. Zn(2+)-binding residues include cysteine 825, cysteine 827, cysteine 836, and cysteine 837.

This sequence belongs to the SecA family. As to quaternary structure, part of the essential Sec protein translocation apparatus which comprises SecA, SecYEG and auxiliary proteins SecDF. Other proteins may be involved. Monomer and many different homodimers can be isolated, some of which are not formed in the presence of a synthetic signal peptide. A single SecA monomer interacts with SecY in the channel. Only shows some colocalization with FloA or FloT membrane assemblies. It depends on Zn(2+) as a cofactor.

It localises to the cell membrane. Its subcellular location is the cytoplasm. The protein localises to the membrane raft. The catalysed reaction is ATP + H2O + cellular proteinSide 1 = ADP + phosphate + cellular proteinSide 2.. In terms of biological role, part of the Sec protein translocase complex. Interacts with the SecYEG preprotein conducting channel. Has a central role in coupling the hydrolysis of ATP to the transfer of proteins into and across the cell membrane, serving as an ATP-driven molecular motor driving the stepwise translocation of polypeptide chains across the membrane. The chain is Protein translocase subunit SecA from Bacillus subtilis (strain 168).